The following is a 423-amino-acid chain: UPF0229 protein PLES_05841 (423 aa).

The interval 84 to 107 (AGEHIARPSGGGGGRGGGKASNSG) is disordered. Residues 92–102 (SGGGGGRGGGK) are compositionally biased toward gly residues.

It belongs to the UPF0229 family.

In Pseudomonas aeruginosa (strain LESB58), this protein is UPF0229 protein PLES_05841.